A 439-amino-acid polypeptide reads, in one-letter code: 26S proteasome regulatory subunit 4 (439 aa).

2 disordered regions span residues Met1–Leu48 and Glu82–Thr104. Composition is skewed to basic and acidic residues over residues Gly12–Glu25 and Glu82–Arg102. Gly225–Thr232 contacts ATP.

It belongs to the AAA ATPase family. As to quaternary structure, interacts with PSMD5.

It localises to the cytoplasm. The protein localises to the nucleus. Functionally, the 26S proteasome is involved in the ATP-dependent degradation of ubiquitinated proteins. The regulatory (or ATPase) complex confers ATP dependency and substrate specificity to the 26S complex. This chain is 26S proteasome regulatory subunit 4 (Rpt2), found in Drosophila melanogaster (Fruit fly).